The sequence spans 518 residues: Flagellin (518 aa).

This sequence belongs to the bacterial flagellin family.

It localises to the secreted. The protein resides in the bacterial flagellum. Flagellin is the subunit protein which polymerizes to form the filaments of bacterial flagella. The chain is Flagellin (flaA) from Aquifex aeolicus (strain VF5).